The chain runs to 1594 residues: Protein SHORTAGE IN CHIASMATA 1 (1594 aa).

5 disordered regions span residues 1148–1180 (DSRSVMTDSSSSVSSGPDSDTHHVSVHSGSKKK), 1239–1283 (APFK…QPDF), 1396–1426 (AADIDSSSERYATEKDSKYDNNTSLRGYADN), 1491–1523 (RSRARKQQQSLPSYASPPSLETPGNIKKANTKR), and 1536–1594 (GGNK…LVWK). Residues 1151–1165 (SVMTDSSSSVSSGPD) show a composition bias toward low complexity. 2 stretches are compositionally biased toward basic and acidic residues: residues 1254 to 1265 (PSKDPERFDKKS) and 1402 to 1414 (SSERYATEKDSKY). Over residues 1577–1594 (QSLSYTANGTGQTKLVWK) the composition is skewed to polar residues.

Belongs to the XPF family. Interacts with PTD. Highest levels in young buds, where male meiosis occurs. Also present at low levels in plantlets, leaves, flowers, and roots.

Its subcellular location is the nucleus. Its function is as follows. Essential for the formation of class I meiotic crossovers. The chain is Protein SHORTAGE IN CHIASMATA 1 from Arabidopsis thaliana (Mouse-ear cress).